Reading from the N-terminus, the 439-residue chain is Ribosomal protein uS12 methylthiotransferase RimO (439 aa).

The MTTase N-terminal domain maps to glycine 6 to proline 116. Residues cysteine 15, cysteine 51, cysteine 80, cysteine 148, cysteine 152, and cysteine 155 each coordinate [4Fe-4S] cluster. The Radical SAM core domain maps to leucine 134–serine 371. A TRAM domain is found at glutamine 374–valine 439.

The protein belongs to the methylthiotransferase family. RimO subfamily. The cofactor is [4Fe-4S] cluster.

The protein resides in the cytoplasm. It carries out the reaction L-aspartate(89)-[ribosomal protein uS12]-hydrogen + (sulfur carrier)-SH + AH2 + 2 S-adenosyl-L-methionine = 3-methylsulfanyl-L-aspartate(89)-[ribosomal protein uS12]-hydrogen + (sulfur carrier)-H + 5'-deoxyadenosine + L-methionine + A + S-adenosyl-L-homocysteine + 2 H(+). Its function is as follows. Catalyzes the methylthiolation of an aspartic acid residue of ribosomal protein uS12. In Hahella chejuensis (strain KCTC 2396), this protein is Ribosomal protein uS12 methylthiotransferase RimO.